The chain runs to 198 residues: MTEKDQSVNNEEFAEKEDNTAKDSNTDEQIEKTASEDDVQNDSSAVDDKEKEIQQLKEEVNEQEEKYLRLYAEFENYKRRIQNENQTLKTYQAQCVLTDILPTIDNIERALQIEGEDESFKSLQKGVQMVYESLLRALEENGLEKIEAVGQQFDPNFHQAVMQDEDDSFESNAVTQELQTGYKLKDRVLRPSMVKVNQ.

Positions 1-58 are disordered; it reads MTEKDQSVNNEEFAEKEDNTAKDSNTDEQIEKTASEDDVQNDSSAVDDKEKEIQQLKE. 2 stretches are compositionally biased toward basic and acidic residues: residues 16 to 35 and 46 to 58; these read KEDN…KTAS and VDDK…QLKE.

It belongs to the GrpE family. Homodimer.

It is found in the cytoplasm. Participates actively in the response to hyperosmotic and heat shock by preventing the aggregation of stress-denatured proteins, in association with DnaK and GrpE. It is the nucleotide exchange factor for DnaK and may function as a thermosensor. Unfolded proteins bind initially to DnaJ; upon interaction with the DnaJ-bound protein, DnaK hydrolyzes its bound ATP, resulting in the formation of a stable complex. GrpE releases ADP from DnaK; ATP binding to DnaK triggers the release of the substrate protein, thus completing the reaction cycle. Several rounds of ATP-dependent interactions between DnaJ, DnaK and GrpE are required for fully efficient folding. The polypeptide is Protein GrpE (Staphylococcus carnosus (strain TM300)).